Reading from the N-terminus, the 335-residue chain is Glutamyl-tRNA reductase (335 aa).

Substrate contacts are provided by residues 60 to 63, Ser-110, 115 to 117, and Gln-121; these read TCHR and ETE. Cys-61 (nucleophile) is an active-site residue. 189 to 194 contacts NADP(+); it reads GYSEIN.

This sequence belongs to the glutamyl-tRNA reductase family. As to quaternary structure, homodimer.

It carries out the reaction (S)-4-amino-5-oxopentanoate + tRNA(Glu) + NADP(+) = L-glutamyl-tRNA(Glu) + NADPH + H(+). It functions in the pathway porphyrin-containing compound metabolism; protoporphyrin-IX biosynthesis; 5-aminolevulinate from L-glutamyl-tRNA(Glu): step 1/2. Its function is as follows. Catalyzes the NADPH-dependent reduction of glutamyl-tRNA(Glu) to glutamate 1-semialdehyde (GSA). The chain is Glutamyl-tRNA reductase from Chlamydia trachomatis serovar A (strain ATCC VR-571B / DSM 19440 / HAR-13).